A 243-amino-acid polypeptide reads, in one-letter code: 1-(5-phosphoribosyl)-5-[(5-phosphoribosylamino)methylideneamino] imidazole-4-carboxamide isomerase (243 aa).

Residue Asp8 is the Proton acceptor of the active site. The Proton donor role is filled by Asp129.

It belongs to the HisA/HisF family.

The protein localises to the cytoplasm. The catalysed reaction is 1-(5-phospho-beta-D-ribosyl)-5-[(5-phospho-beta-D-ribosylamino)methylideneamino]imidazole-4-carboxamide = 5-[(5-phospho-1-deoxy-D-ribulos-1-ylimino)methylamino]-1-(5-phospho-beta-D-ribosyl)imidazole-4-carboxamide. It functions in the pathway amino-acid biosynthesis; L-histidine biosynthesis; L-histidine from 5-phospho-alpha-D-ribose 1-diphosphate: step 4/9. The chain is 1-(5-phosphoribosyl)-5-[(5-phosphoribosylamino)methylideneamino] imidazole-4-carboxamide isomerase from Carboxydothermus hydrogenoformans (strain ATCC BAA-161 / DSM 6008 / Z-2901).